The chain runs to 536 residues: Phosphoenolpyruvate carboxykinase (ATP) (536 aa).

Substrate contacts are provided by Arg62, Tyr203, and Lys209. Residues Lys209, His228, and Gly244–Thr252 each bind ATP. Positions 209 and 228 each coordinate Mn(2+). Asp265 is a binding site for Mn(2+). Residues Glu293, Arg329, Arg445–Ile446, and Thr451 contribute to the ATP site. Arg329 is a binding site for substrate.

The protein belongs to the phosphoenolpyruvate carboxykinase (ATP) family. Monomer. The cofactor is Mn(2+).

It localises to the cytoplasm. It catalyses the reaction oxaloacetate + ATP = phosphoenolpyruvate + ADP + CO2. The protein operates within carbohydrate biosynthesis; gluconeogenesis. Its function is as follows. Involved in the gluconeogenesis. Catalyzes the conversion of oxaloacetate (OAA) to phosphoenolpyruvate (PEP) through direct phosphoryl transfer between the nucleoside triphosphate and OAA. This Actinobacillus pleuropneumoniae serotype 7 (strain AP76) protein is Phosphoenolpyruvate carboxykinase (ATP).